We begin with the raw amino-acid sequence, 342 residues long: Renalase (342 aa).

A signal peptide spans methionine 1 to alanine 17. FAD contacts are provided by residues threonine 12, arginine 42, and glutamine 61–tyrosine 62.

It belongs to the renalase family. Requires FAD as cofactor. In terms of tissue distribution, expressed predominantly in kidney and testis with lower levels in liver, heart and embryo and weak expression in brain and skeletal muscle.

The protein resides in the secreted. The enzyme catalyses 1,2-dihydro-beta-NAD + O2 + H(+) = H2O2 + NAD(+). It carries out the reaction 1,2-dihydro-beta-NADP + O2 + H(+) = H2O2 + NADP(+). It catalyses the reaction 1,6-dihydro-beta-NADP + O2 + H(+) = H2O2 + NADP(+). The catalysed reaction is 1,6-dihydro-beta-NAD + O2 + H(+) = H2O2 + NAD(+). In terms of biological role, catalyzes the oxidation of the less abundant 1,2-dihydro-beta-NAD(P) and 1,6-dihydro-beta-NAD(P) to form beta-NAD(P)(+). The enzyme hormone is secreted by the kidney, and circulates in blood and modulates cardiac function and systemic blood pressure. Lowers blood pressure in vivo by decreasing cardiac contractility and heart rate and preventing a compensatory increase in peripheral vascular tone, suggesting a causal link to the increased plasma catecholamine and heightened cardiovascular risk. High concentrations of catecholamines activate plasma renalase and promotes its secretion and synthesis. The protein is Renalase of Mus musculus (Mouse).